Here is an 81-residue protein sequence, read N- to C-terminus: Antimicrobial peptide Con22 (81 aa).

The signal sequence occupies residues 1 to 22 (MNAKVMLVCLLVTMLVMEPAEA). The propeptide occupies 66–81 (EAGQIPFDEFMNVLYS).

Belongs to the non-disulfide-bridged peptide (NDBP) superfamily. Long chain multifunctional peptide (group 2) family. As to expression, expressed by the venom gland.

It localises to the secreted. It is found in the target cell membrane. Functionally, at high concentrations, acts as a pore former in cellular membranes and causes the leakage of the cells. At submicromolar concentrations, degranulates granulocytes and has a weak hemolytic activity against human erythrocytes. Also strongly inhibits the production of superoxide anions. Has a strong antibacterial activity against Gram-negative bacteria but is less active against Gram-positive bacteria. Also has antifungal activity. This chain is Antimicrobial peptide Con22, found in Urodacus yaschenkoi (Inland robust scorpion).